Here is a 432-residue protein sequence, read N- to C-terminus: Putative D-alanyl-D-alanine carboxypeptidase (432 aa).

A helical; Signal-anchor membrane pass occupies residues 7 to 25 (ATVLLTFSLSAFAVEYPVL).

Belongs to the peptidase S12 family. YfeW subfamily.

It is found in the cell inner membrane. It catalyses the reaction Preferential cleavage: (Ac)2-L-Lys-D-Ala-|-D-Ala. Also transpeptidation of peptidyl-alanyl moieties that are N-acyl substituents of D-alanine.. The sequence is that of Putative D-alanyl-D-alanine carboxypeptidase from Salmonella schwarzengrund (strain CVM19633).